Here is a 127-residue protein sequence, read N- to C-terminus: Small ribosomal subunit protein uS11 (127 aa).

Belongs to the universal ribosomal protein uS11 family. In terms of assembly, part of the 30S ribosomal subunit. Interacts with proteins S7 and S18. Binds to IF-3.

Its function is as follows. Located on the platform of the 30S subunit, it bridges several disparate RNA helices of the 16S rRNA. Forms part of the Shine-Dalgarno cleft in the 70S ribosome. The sequence is that of Small ribosomal subunit protein uS11 from Streptococcus pyogenes serotype M49 (strain NZ131).